A 395-amino-acid polypeptide reads, in one-letter code: Acetate kinase (395 aa).

Asn7 serves as a coordination point for Mg(2+). Lys14 contributes to the ATP binding site. Arg85 is a binding site for substrate. Asp142 functions as the Proton donor/acceptor in the catalytic mechanism. Residues 202–206, 277–279, and 325–329 each bind ATP; these read HLGNG, DMR, and GIGEN. Glu378 is a Mg(2+) binding site.

It belongs to the acetokinase family. In terms of assembly, homodimer. The cofactor is Mg(2+). Mn(2+) is required as a cofactor.

Its subcellular location is the cytoplasm. The enzyme catalyses acetate + ATP = acetyl phosphate + ADP. Its pathway is metabolic intermediate biosynthesis; acetyl-CoA biosynthesis; acetyl-CoA from acetate: step 1/2. Functionally, catalyzes the formation of acetyl phosphate from acetate and ATP. Can also catalyze the reverse reaction. The chain is Acetate kinase from Deinococcus geothermalis (strain DSM 11300 / CIP 105573 / AG-3a).